The following is a 231-amino-acid chain: Large ribosomal subunit protein uL1 (231 aa).

The protein belongs to the universal ribosomal protein uL1 family. In terms of assembly, part of the 50S ribosomal subunit.

Its function is as follows. Binds directly to 23S rRNA. The L1 stalk is quite mobile in the ribosome, and is involved in E site tRNA release. In terms of biological role, protein L1 is also a translational repressor protein, it controls the translation of the L11 operon by binding to its mRNA. The polypeptide is Large ribosomal subunit protein uL1 (Halorhodospira halophila (strain DSM 244 / SL1) (Ectothiorhodospira halophila (strain DSM 244 / SL1))).